Here is a 176-residue protein sequence, read N- to C-terminus: uncharacterized protein (176 aa).

Over residues 1–12 (MRLPYSSSKPIP) the composition is skewed to polar residues. 2 disordered regions span residues 1 to 88 (MRLP…PQQQ) and 109 to 132 (VNNS…PSSS). Residues 13-24 (TNNNNNNNNTNN) are compositionally biased toward low complexity. The span at 37-46 (SYYQTQENNK) shows a compositional bias: polar residues. Low complexity predominate over residues 47 to 88 (PQQSQQHPLLQHQQQQQQQQQQQQQQQQQQQQQQQQQQPQQQ).

This is an uncharacterized protein from Dictyostelium discoideum (Social amoeba).